Reading from the N-terminus, the 214-residue chain is Adenylate kinase (214 aa).

10–15 contributes to the ATP binding site; that stretch reads GAGKGT. Residues 30-59 form an NMP region; it reads STGDMLRAAIKAGTELGKQAKAVIDAGQLV. AMP is bound by residues T31, R36, 57 to 59, 85 to 88, and Q92; these read QLV and GFPR. Positions 122–159 are LID; that stretch reads GRRAHLPSGRTYHVVYNPPKVEGKDDVTGEDLVVRDDD. ATP-binding positions include R123 and 132–133; that span reads TY. AMP contacts are provided by R156 and R167. K200 serves as a coordination point for ATP.

It belongs to the adenylate kinase family. As to quaternary structure, monomer.

It localises to the cytoplasm. The enzyme catalyses AMP + ATP = 2 ADP. It functions in the pathway purine metabolism; AMP biosynthesis via salvage pathway; AMP from ADP: step 1/1. Its function is as follows. Catalyzes the reversible transfer of the terminal phosphate group between ATP and AMP. Plays an important role in cellular energy homeostasis and in adenine nucleotide metabolism. In Vibrio campbellii (strain ATCC BAA-1116), this protein is Adenylate kinase.